Consider the following 518-residue polypeptide: Glutamate--cysteine ligase (518 aa).

The protein belongs to the glutamate--cysteine ligase type 1 family. Type 1 subfamily.

The enzyme catalyses L-cysteine + L-glutamate + ATP = gamma-L-glutamyl-L-cysteine + ADP + phosphate + H(+). It participates in sulfur metabolism; glutathione biosynthesis; glutathione from L-cysteine and L-glutamate: step 1/2. This is Glutamate--cysteine ligase from Salmonella paratyphi C (strain RKS4594).